Consider the following 457-residue polypeptide: MYNCAIILAAGKGKRMKSSMPKVVHKVCGKEMVNHVIDNVRKANISDVNLVIGKGSETVKEHTRDRNVTYSMQEEQLGTGHAVICAEEFLKDKKGTVAIFTGDAPLITNETIQELFEFHNSGKYAATLISSTVQDPTGYGRIIREASGEVKKIVEHKDCNEEELKVNEINSGMYCFDIEVLLNSLKNLNNDNSQGEYYLTDVIEIMKESGEKVGAIVVPYEEIMGVNSRVQLSEAEIVMRKRINHKHMVNGVTFIDCESTYIDVDVEIGNDTIIYPGCVIQGNTTIKEECTLYSNSRICNSIIESGVVVENSVILESHVGEGTTVGPFAYIRPETKIGKSARIGDFVEIKKSTIGDNTKVSHLTYIGDAEVGSKCNFGCGTVVVNYDGQKKQKTIIGNNAFIGCNTNLISPVKVNDNTYIAAGSTITKEVPEGSLAIARSKQINKEGWLDKKGLLKK.

Residues 1–229 (MYNCAIILAA…YEEIMGVNSR (229 aa)) form a pyrophosphorylase region. Residues 8-11 (LAAG), Lys-22, Gln-73, and 78-79 (GT) each bind UDP-N-acetyl-alpha-D-glucosamine. Residue Asp-103 participates in Mg(2+) binding. Positions 140, 155, 170, and 227 each coordinate UDP-N-acetyl-alpha-D-glucosamine. Asn-227 provides a ligand contact to Mg(2+). Residues 230–250 (VQLSEAEIVMRKRINHKHMVN) form a linker region. Positions 251-457 (GVTFIDCEST…WLDKKGLLKK (207 aa)) are N-acetyltransferase. UDP-N-acetyl-alpha-D-glucosamine is bound by residues Arg-332 and Lys-350. His-362 (proton acceptor) is an active-site residue. Tyr-365 and Asn-376 together coordinate UDP-N-acetyl-alpha-D-glucosamine. Residues 385 to 386 (NY), Ala-422, and Arg-439 each bind acetyl-CoA.

It in the N-terminal section; belongs to the N-acetylglucosamine-1-phosphate uridyltransferase family. The protein in the C-terminal section; belongs to the transferase hexapeptide repeat family. In terms of assembly, homotrimer. It depends on Mg(2+) as a cofactor.

It is found in the cytoplasm. The catalysed reaction is alpha-D-glucosamine 1-phosphate + acetyl-CoA = N-acetyl-alpha-D-glucosamine 1-phosphate + CoA + H(+). It catalyses the reaction N-acetyl-alpha-D-glucosamine 1-phosphate + UTP + H(+) = UDP-N-acetyl-alpha-D-glucosamine + diphosphate. It functions in the pathway nucleotide-sugar biosynthesis; UDP-N-acetyl-alpha-D-glucosamine biosynthesis; N-acetyl-alpha-D-glucosamine 1-phosphate from alpha-D-glucosamine 6-phosphate (route II): step 2/2. It participates in nucleotide-sugar biosynthesis; UDP-N-acetyl-alpha-D-glucosamine biosynthesis; UDP-N-acetyl-alpha-D-glucosamine from N-acetyl-alpha-D-glucosamine 1-phosphate: step 1/1. Its pathway is bacterial outer membrane biogenesis; LPS lipid A biosynthesis. In terms of biological role, catalyzes the last two sequential reactions in the de novo biosynthetic pathway for UDP-N-acetylglucosamine (UDP-GlcNAc). The C-terminal domain catalyzes the transfer of acetyl group from acetyl coenzyme A to glucosamine-1-phosphate (GlcN-1-P) to produce N-acetylglucosamine-1-phosphate (GlcNAc-1-P), which is converted into UDP-GlcNAc by the transfer of uridine 5-monophosphate (from uridine 5-triphosphate), a reaction catalyzed by the N-terminal domain. This chain is Bifunctional protein GlmU, found in Clostridium botulinum (strain Loch Maree / Type A3).